The primary structure comprises 746 residues: Polyphosphate kinase (746 aa).

The span at 1–17 (MRQPNTQAEAQHTQPSV) shows a compositional bias: polar residues. Residues 1-60 (MRQPNTQAEAQHTQPSVGSIAAHRPNTVAATVSGLEPDIDADLDAYEESEESQDGGARLP) are disordered. Over residues 37-53 (PDIDADLDAYEESEESQ) the composition is skewed to acidic residues. Residue Asn102 participates in ATP binding. Mg(2+) contacts are provided by Arg429 and Arg459. The active-site Phosphohistidine intermediate is the His489. Residues Tyr522, Arg618, and His646 each contribute to the ATP site.

The protein belongs to the polyphosphate kinase 1 (PPK1) family. Requires Mg(2+) as cofactor. An intermediate of this reaction is the autophosphorylated ppk in which a phosphate is covalently linked to a histidine residue through a N-P bond.

It catalyses the reaction [phosphate](n) + ATP = [phosphate](n+1) + ADP. Its function is as follows. Catalyzes the reversible transfer of the terminal phosphate of ATP to form a long-chain polyphosphate (polyP). This is Polyphosphate kinase from Streptomyces coelicolor (strain ATCC BAA-471 / A3(2) / M145).